Reading from the N-terminus, the 512-residue chain is ATP synthase subunit alpha 2 (512 aa).

An ATP-binding site is contributed by 169 to 176; sequence GDRQTGKT.

Belongs to the ATPase alpha/beta chains family. As to quaternary structure, F-type ATPases have 2 components, CF(1) - the catalytic core - and CF(0) - the membrane proton channel. CF(1) has five subunits: alpha(3), beta(3), gamma(1), delta(1), epsilon(1). CF(0) has four main subunits: a(1), b(1), b'(1) and c(9-12).

The protein localises to the cell inner membrane. The enzyme catalyses ATP + H2O + 4 H(+)(in) = ADP + phosphate + 5 H(+)(out). Functionally, produces ATP from ADP in the presence of a proton gradient across the membrane. The alpha chain is a regulatory subunit. The chain is ATP synthase subunit alpha 2 from Dinoroseobacter shibae (strain DSM 16493 / NCIMB 14021 / DFL 12).